The chain runs to 389 residues: S-adenosylmethionine synthase (389 aa).

Residue His19 participates in ATP binding. Asp21 contributes to the Mg(2+) binding site. Glu47 serves as a coordination point for K(+). Positions 60 and 103 each coordinate L-methionine. The flexible loop stretch occupies residues 103–113 (QSVDIAQGVDR). ATP-binding positions include 168–170 (DGK), 234–235 (RF), Asp243, 249–250 (RK), Ala266, and Lys270. Asp243 is an L-methionine binding site. Residue Lys274 participates in L-methionine binding.

This sequence belongs to the AdoMet synthase family. Homotetramer; dimer of dimers. Requires Mg(2+) as cofactor. The cofactor is K(+).

The protein localises to the cytoplasm. The enzyme catalyses L-methionine + ATP + H2O = S-adenosyl-L-methionine + phosphate + diphosphate. The protein operates within amino-acid biosynthesis; S-adenosyl-L-methionine biosynthesis; S-adenosyl-L-methionine from L-methionine: step 1/1. In terms of biological role, catalyzes the formation of S-adenosylmethionine (AdoMet) from methionine and ATP. The overall synthetic reaction is composed of two sequential steps, AdoMet formation and the subsequent tripolyphosphate hydrolysis which occurs prior to release of AdoMet from the enzyme. This chain is S-adenosylmethionine synthase, found in Maridesulfovibrio salexigens (strain ATCC 14822 / DSM 2638 / NCIMB 8403 / VKM B-1763) (Desulfovibrio salexigens).